A 296-amino-acid polypeptide reads, in one-letter code: 4-diphosphocytidyl-2-C-methyl-D-erythritol kinase (296 aa).

Lys19 is a catalytic residue. An ATP-binding site is contributed by 102 to 112 (PMGAGLGGGSS). Asp144 is an active-site residue.

This sequence belongs to the GHMP kinase family. IspE subfamily.

It carries out the reaction 4-CDP-2-C-methyl-D-erythritol + ATP = 4-CDP-2-C-methyl-D-erythritol 2-phosphate + ADP + H(+). It participates in isoprenoid biosynthesis; isopentenyl diphosphate biosynthesis via DXP pathway; isopentenyl diphosphate from 1-deoxy-D-xylulose 5-phosphate: step 3/6. Catalyzes the phosphorylation of the position 2 hydroxy group of 4-diphosphocytidyl-2C-methyl-D-erythritol. The protein is 4-diphosphocytidyl-2-C-methyl-D-erythritol kinase of Burkholderia pseudomallei (strain 1710b).